A 216-amino-acid polypeptide reads, in one-letter code: MVNRTAIIKQPDNISFFNDVYKLQKEYQESLILDNSNPDFIWIGEHQLCYTLGRGSNYDNLLFSLNDDNYDVFKIDRGGEVTCHMPGQLVTYLVLDLKNFNKDLNWYLRKIEEIIIKILGTFNIDCHSRDGFTGVWIGNKKIASIGIGCKRWITINGFSINIDCELENFNKIVPCGIENCLMANMIDYNKNLNIQEVKRIVKKIIQEEFNFDFVSK.

The 179-residue stretch at 35 to 213 (NSNPDFIWIG…IIQEEFNFDF (179 aa)) folds into the BPL/LPL catalytic domain. Residues 77-84 (RGGEVTCH), 144-146 (SIG), and 157-159 (GFS) contribute to the substrate site. Cys175 functions as the Acyl-thioester intermediate in the catalytic mechanism.

The protein belongs to the LipB family.

It localises to the cytoplasm. It carries out the reaction octanoyl-[ACP] + L-lysyl-[protein] = N(6)-octanoyl-L-lysyl-[protein] + holo-[ACP] + H(+). The protein operates within protein modification; protein lipoylation via endogenous pathway; protein N(6)-(lipoyl)lysine from octanoyl-[acyl-carrier-protein]: step 1/2. Functionally, catalyzes the transfer of endogenously produced octanoic acid from octanoyl-acyl-carrier-protein onto the lipoyl domains of lipoate-dependent enzymes. Lipoyl-ACP can also act as a substrate although octanoyl-ACP is likely to be the physiological substrate. The polypeptide is Octanoyltransferase (Prochlorococcus marinus (strain MIT 9215)).